The sequence spans 400 residues: Putative transposase for insertion sequence element IS5376 (400 aa).

Residues 5 to 67 (GEFFMIKEMY…PFKPYLQKRM (63 aa)) enclose the HTH IS21-type domain. Positions 20 to 39 (ISDIARELGIDRKTVRKYIH) form a DNA-binding region, H-T-H motif. Residues 35-55 (RKYIHSPNPPSKSKRKQRKSK) form a disordered region. An Integrase catalytic domain is found at 113–287 (YETLPGEQMQ…SPQERWAEES (175 aa)).

The protein belongs to the transposase IS21/IS408/IS1162 family.

Its function is as follows. Involved in the transposition of the insertion sequence. In Geobacillus stearothermophilus (Bacillus stearothermophilus), this protein is Putative transposase for insertion sequence element IS5376.